Consider the following 90-residue polypeptide: DNA-binding protein HU-1 (90 aa).

T4 is modified (phosphothreonine).

The protein belongs to the bacterial histone-like protein family. Homodimer.

Its function is as follows. Histone-like DNA-binding protein which is capable of wrapping DNA to stabilize it, and thus to prevent its denaturation under extreme environmental conditions. This chain is DNA-binding protein HU-1 (hup2), found in Halalkalibacterium halodurans (strain ATCC BAA-125 / DSM 18197 / FERM 7344 / JCM 9153 / C-125) (Bacillus halodurans).